A 471-amino-acid chain; its full sequence is Thymidine phosphorylase (471 aa).

The span at 1-10 shows a compositional bias: pro residues; the sequence is MAAPGTPPPS. Residues 1-21 form a disordered region; it reads MAAPGTPPPSASGGGGGEPRQ. At Thr6 the chain carries Phosphothreonine. His102, Arg188, Ser203, and Lys207 together coordinate substrate.

It belongs to the thymidine/pyrimidine-nucleoside phosphorylase family. As to quaternary structure, homodimer.

The enzyme catalyses thymidine + phosphate = 2-deoxy-alpha-D-ribose 1-phosphate + thymine. It functions in the pathway pyrimidine metabolism; dTMP biosynthesis via salvage pathway; dTMP from thymine: step 1/2. Functionally, catalyzes the reversible phosphorolysis of thymidine. The produced molecules are then utilized as carbon and energy sources or in the rescue of pyrimidine bases for nucleotide synthesis. The polypeptide is Thymidine phosphorylase (Tymp) (Mus musculus (Mouse)).